A 384-amino-acid chain; its full sequence is tRNA-specific 2-thiouridylase MnmA (384 aa).

Residues 21 to 28 (GMSGGVDS) and Met-47 each bind ATP. Residues 107 to 109 (NPD) are interaction with target base in tRNA. Catalysis depends on Cys-112, which acts as the Nucleophile. Cysteines 112 and 208 form a disulfide. Gly-136 is a binding site for ATP. Residues 158–160 (KDQ) are interaction with tRNA. The active-site Cysteine persulfide intermediate is Cys-208. Positions 320 to 321 (RY) are interaction with tRNA.

The protein belongs to the MnmA/TRMU family.

It localises to the cytoplasm. The enzyme catalyses S-sulfanyl-L-cysteinyl-[protein] + uridine(34) in tRNA + AH2 + ATP = 2-thiouridine(34) in tRNA + L-cysteinyl-[protein] + A + AMP + diphosphate + H(+). Catalyzes the 2-thiolation of uridine at the wobble position (U34) of tRNA, leading to the formation of s(2)U34. The chain is tRNA-specific 2-thiouridylase MnmA from Chromohalobacter salexigens (strain ATCC BAA-138 / DSM 3043 / CIP 106854 / NCIMB 13768 / 1H11).